The primary structure comprises 1012 residues: Vacuolar membrane protease (1012 aa).

The Cytoplasmic portion of the chain corresponds to 1–60 (MRRSTDPRNLLVRRGPLLVDGESAISELDPGFFPTGDAPKMSSTTRRRFNLIAFTPGPVT). The helical transmembrane segment at 61–81 (VISSLVYLALLIPLLLVHTIV) threads the bilayer. Over 82 to 432 (PSAPKSNPKG…SFAVFRLHTL (351 aa)) the chain is Vacuolar. Asparagine 159 carries N-linked (GlcNAc...) asparagine glycosylation. Residues histidine 215 and aspartate 227 each coordinate Zn(2+). Residue glutamate 261 is the Proton acceptor of the active site. Residues glutamate 262, glutamate 287, and histidine 360 each contribute to the Zn(2+) site. A helical membrane pass occupies residues 433–453 (FAISVTLLVVCPIVLFVIGII). Topologically, residues 454-487 (LSKMDKMYLFSIHETIPETKEKVSVRGLRGLFRY) are cytoplasmic. The helical transmembrane segment at 488-508 (PIILVVSSGILIGLSYLLAKV) threads the bilayer. The Vacuolar segment spans residues 509–518 (NPFIVHSSSY). The chain crosses the membrane as a helical span at residues 519–539 (AVWSMMLSSWIFMTWFLSCIA). Over 540-550 (DFFRPSALHRA) the chain is Cytoplasmic. Residues 551–571 (YTFTWQLLVMWVLLVISTVYV) form a helical membrane-spanning segment. The Vacuolar segment spans residues 572 to 575 (NQHD). A helical membrane pass occupies residues 576–596 (IAAGYFIVFYFAGTFLATLIS). Over 597–710 (YLELFALPNK…WSASLPTWTW (114 aa)) the chain is Cytoplasmic. Positions 614-629 (SQYPSRLGSNRSSRIL) are enriched in polar residues. Positions 614–660 (SQYPSRLGSNRSSRILSPSADELPTGGDNNGEIYDGEEEPTESSSLL) are disordered. Residues 711–731 (VLQFLFVGPVVIMFIGQLGLF) form a helical membrane-spanning segment. The Vacuolar portion of the chain corresponds to 732 to 743 (LTSAMNQVGADG). The chain crosses the membrane as a helical span at residues 744–764 (VGLLVVYIAIAVFSVLLLIPL). Over 765 to 777 (SPFIHRFTYHVPT) the chain is Cytoplasmic. The chain crosses the membrane as a helical span at residues 778 to 798 (FLLLVFIATLIYNLAAFPFSA). At 799-1012 (ENRLKIFFVQ…DGLVEVSRGF (214 aa)) the chain is on the vacuolar side. N-linked (GlcNAc...) asparagine glycosylation is found at asparagine 842 and asparagine 878.

The protein belongs to the peptidase M28 family. Requires Zn(2+) as cofactor.

Its subcellular location is the vacuole membrane. Functionally, may be involved in vacuolar sorting and osmoregulation. The protein is Vacuolar membrane protease of Coccidioides posadasii (strain C735) (Valley fever fungus).